The sequence spans 1371 residues: DNA-directed RNA polymerase subunit beta (1371 aa).

This sequence belongs to the RNA polymerase beta chain family. As to quaternary structure, the RNAP catalytic core consists of 2 alpha, 1 beta, 1 beta' and 1 omega subunit. When a sigma factor is associated with the core the holoenzyme is formed, which can initiate transcription.

It carries out the reaction RNA(n) + a ribonucleoside 5'-triphosphate = RNA(n+1) + diphosphate. In terms of biological role, DNA-dependent RNA polymerase catalyzes the transcription of DNA into RNA using the four ribonucleoside triphosphates as substrates. The sequence is that of DNA-directed RNA polymerase subunit beta from Citrifermentans bemidjiense (strain ATCC BAA-1014 / DSM 16622 / JCM 12645 / Bem) (Geobacter bemidjiensis).